A 347-amino-acid chain; its full sequence is Probable dual-specificity RNA methyltransferase RlmN (347 aa).

Glu-90 serves as the catalytic Proton acceptor. Residues 96-326 (YKHGNSICIS…VTVRREMGSD (231 aa)) enclose the Radical SAM core domain. Cysteines 103 and 331 form a disulfide. [4Fe-4S] cluster is bound by residues Cys-110, Cys-114, and Cys-117. S-adenosyl-L-methionine is bound by residues 157 to 158 (GE), Ser-189, 212 to 214 (SLH), and Asn-288. Residue Cys-331 is the S-methylcysteine intermediate of the active site.

It belongs to the radical SAM superfamily. RlmN family. The cofactor is [4Fe-4S] cluster.

Its subcellular location is the cytoplasm. The catalysed reaction is adenosine(2503) in 23S rRNA + 2 reduced [2Fe-2S]-[ferredoxin] + 2 S-adenosyl-L-methionine = 2-methyladenosine(2503) in 23S rRNA + 5'-deoxyadenosine + L-methionine + 2 oxidized [2Fe-2S]-[ferredoxin] + S-adenosyl-L-homocysteine. It catalyses the reaction adenosine(37) in tRNA + 2 reduced [2Fe-2S]-[ferredoxin] + 2 S-adenosyl-L-methionine = 2-methyladenosine(37) in tRNA + 5'-deoxyadenosine + L-methionine + 2 oxidized [2Fe-2S]-[ferredoxin] + S-adenosyl-L-homocysteine. In terms of biological role, specifically methylates position 2 of adenine 2503 in 23S rRNA and position 2 of adenine 37 in tRNAs. The chain is Probable dual-specificity RNA methyltransferase RlmN from Clostridium botulinum (strain Alaska E43 / Type E3).